Reading from the N-terminus, the 434-residue chain is MAVTVETLEKLERRITLILSADTIKNEVEMRLKRLAKTVKADGFRPGKVPMSVVAQRYGYSVQYEVMNDKVGEAFSKAANEAQLRVAGAPRISEKEGAPEGELAFDATFEVYPDVKIGDLSATEIDRVSTEVTDAAIDKTLDILRKQRRTFAQRAASEGAVDGDRVTIDFEGKIDGVPFDGGKAEGFQFILGEGRMLEAFEKAVRGMKTGESKTFPLQFPDDYQGKEVAGKEADFLVTLTKIEAQHLPEVDEAFAQSLGIQDPTLEGLRADIRKNLEREVKNRLIARNKSAVMEALIKVADLDLPKALVQNETDRMIEGARADLKQRGIKDADKAPIPAEIFHEQAERRVRLGLVVAELVRTNQLQAKGEQIGAHIEEMALSYEKPEEVRRWYFGDRQRLAEVEALVVENNVTEFVLSKAKVSDKQLPFDELMV.

Residues 163–248 (GDRVTIDFEG…LTKIEAQHLP (86 aa)) form the PPIase FKBP-type domain.

The protein belongs to the FKBP-type PPIase family. Tig subfamily.

Its subcellular location is the cytoplasm. It catalyses the reaction [protein]-peptidylproline (omega=180) = [protein]-peptidylproline (omega=0). In terms of biological role, involved in protein export. Acts as a chaperone by maintaining the newly synthesized protein in an open conformation. Functions as a peptidyl-prolyl cis-trans isomerase. This is Trigger factor from Methylibium petroleiphilum (strain ATCC BAA-1232 / LMG 22953 / PM1).